A 206-amino-acid polypeptide reads, in one-letter code: Small ribosomal subunit protein uS4 (206 aa).

The region spanning 96 to 156 (GRLDNVVYRM…EKAKKQSRVK (61 aa)) is the S4 RNA-binding domain.

The protein belongs to the universal ribosomal protein uS4 family. Part of the 30S ribosomal subunit. Contacts protein S5. The interaction surface between S4 and S5 is involved in control of translational fidelity.

One of the primary rRNA binding proteins, it binds directly to 16S rRNA where it nucleates assembly of the body of the 30S subunit. In terms of biological role, with S5 and S12 plays an important role in translational accuracy. The chain is Small ribosomal subunit protein uS4 from Klebsiella pneumoniae (strain 342).